Here is a 335-residue protein sequence, read N- to C-terminus: Coiled-coil domain-containing protein 68 (335 aa).

Positions 101 to 305 (QLLEMNKENE…KTQVALSSET (205 aa)) form a coiled coil.

In terms of assembly, interacts with CEP170. Expressed in bone marrow, colon, small intestine, spleen, testis, trachea and cutaneous T-cell lymphoma (CTCL).

It is found in the cytoplasm. The protein resides in the cytoskeleton. The protein localises to the microtubule organizing center. It localises to the centrosome. Its subcellular location is the centriole. In terms of biological role, centriolar protein required for centriole subdistal appendage assembly and microtubule anchoring in interphase cells. Together with CCDC120, cooperate with subdistal appendage components ODF2, NIN and CEP170 for hierarchical subdistal appendage assembly. This Homo sapiens (Human) protein is Coiled-coil domain-containing protein 68 (CCDC68).